A 313-amino-acid polypeptide reads, in one-letter code: D-alanine--D-alanine ligase (313 aa).

Positions 111–306 (KQVWHSLGLP…FQQLVLAILA (196 aa)) constitute an ATP-grasp domain. 137 to 192 (AAELGFPLIVKPAHEGSSIGMAKVESVEALIAAWQDAARYDSQVLVEQWIAGPEYT) serves as a coordination point for ATP. Mg(2+) contacts are provided by Asp-260, Glu-273, and Asn-275.

This sequence belongs to the D-alanine--D-alanine ligase family. Mg(2+) serves as cofactor. The cofactor is Mn(2+).

It localises to the cytoplasm. It carries out the reaction 2 D-alanine + ATP = D-alanyl-D-alanine + ADP + phosphate + H(+). The protein operates within cell wall biogenesis; peptidoglycan biosynthesis. In terms of biological role, cell wall formation. This chain is D-alanine--D-alanine ligase, found in Ectopseudomonas mendocina (strain ymp) (Pseudomonas mendocina).